The primary structure comprises 144 residues: Transcription antitermination protein NusB (144 aa).

The protein belongs to the NusB family.

Functionally, involved in transcription antitermination. Required for transcription of ribosomal RNA (rRNA) genes. Binds specifically to the boxA antiterminator sequence of the ribosomal RNA (rrn) operons. This Blochmanniella pennsylvanica (strain BPEN) protein is Transcription antitermination protein NusB.